The following is a 283-amino-acid chain: Prolyl 4-hydroxylase 1 (283 aa).

Residues 1 to 6 (MAPAMK) are Cytoplasmic-facing. Residues 7–27 (IVFGLLTFVTVGMVIGSLLQL) traverse the membrane as a helical; Signal-anchor for type II membrane protein segment. Residues 28–283 (AFINRLEDSY…TKWMRQKATS (256 aa)) are Lumenal-facing. A Fe2OG dioxygenase domain is found at 162-279 (NGELIQVLRY…KWSATKWMRQ (118 aa)). Fe cation is bound by residues histidine 180, aspartate 182, and histidine 260. Lysine 270 contributes to the 2-oxoglutarate binding site.

It belongs to the P4HA family. The cofactor is Fe(2+). Requires L-ascorbate as cofactor.

Its subcellular location is the endoplasmic reticulum membrane. The catalysed reaction is L-prolyl-[collagen] + 2-oxoglutarate + O2 = trans-4-hydroxy-L-prolyl-[collagen] + succinate + CO2. In terms of biological role, catalyzes the post-translational formation of 4-hydroxyproline in -Xaa-Pro-Gly- sequences in proline-rich peptide sequences of plant glycoproteins and other proteins. Hydroxylates preferentially prolines in second positions in the -Pro-Pro-Gly-triplets. Hydroxyprolines are important constituent of many plant cell wall glycoproteins such as extensins, hydroxyproline-rich glycoproteins, lectins and arabinogalactan proteins. Can hydroxylate collagen-like peptides and hypoxia-inducible transcription factor peptides. The sequence is that of Prolyl 4-hydroxylase 1 from Arabidopsis thaliana (Mouse-ear cress).